Reading from the N-terminus, the 240-residue chain is tRNA (guanine-N(1)-)-methyltransferase (240 aa).

S-adenosyl-L-methionine-binding positions include Gly-112 and 132–137 (LGDFVL).

It belongs to the RNA methyltransferase TrmD family. In terms of assembly, homodimer.

The protein localises to the cytoplasm. The catalysed reaction is guanosine(37) in tRNA + S-adenosyl-L-methionine = N(1)-methylguanosine(37) in tRNA + S-adenosyl-L-homocysteine + H(+). Functionally, specifically methylates guanosine-37 in various tRNAs. The protein is tRNA (guanine-N(1)-)-methyltransferase of Cyanothece sp. (strain PCC 7425 / ATCC 29141).